Reading from the N-terminus, the 68-residue chain is Potassium channel toxin epsilon-KTx 1.2 (68 aa).

The N-terminal stretch at 1–26 is a signal peptide; it reads MKFSCGFLLIFLVLSAMIATFSEVEA. 4 disulfide bridges follow: C30–C38, C33–C54, C37–C47, and C42–C52. Y55 is subject to Tyrosine amide. Positions 57–68 are excised as a propeptide; the sequence is RSDLNEEFENYQ.

The protein belongs to the short scorpion toxin superfamily. Potassium channel inhibitor family. Epsilon-KTx 01 subfamily. As to expression, expressed by the venom gland.

The protein resides in the secreted. Potassium channel blocker. At 3 uM, this toxin blocks voltage-gated potassium channels rKv1.2/KCNA2 (5%), hKv1.3/KCNA3 (10%),rKv1.4/KCNA4 (20%), Kv11/hERG (24%), and Shaker-IR (27%). This is Potassium channel toxin epsilon-KTx 1.2 from Tityus serrulatus (Brazilian scorpion).